The chain runs to 793 residues: Pentatricopeptide repeat-containing protein At1g03100, mitochondrial (793 aa).

The N-terminal 87 residues, 1–87, are a transit peptide targeting the mitochondrion; that stretch reads MFSLRKTKLQ…REAISSISGS (87 aa). 11 PPR repeats span residues 257 to 291, 292 to 322, 330 to 364, 458 to 492, 495 to 529, 530 to 564, 565 to 599, 601 to 631, 637 to 671, 672 to 707, and 713 to 747; these read NTQV…GVKA, DANL…IDEA, FWQF…GKVA, TEEI…DSPV, DNSM…GVRT, GSSV…GIQL, DSSC…KILR, GNQK…IREV, GVHD…GHSP, NAQT…AAAT, and DQEL…NMFV.

It belongs to the PPR family. P subfamily.

It is found in the mitochondrion. The sequence is that of Pentatricopeptide repeat-containing protein At1g03100, mitochondrial from Arabidopsis thaliana (Mouse-ear cress).